We begin with the raw amino-acid sequence, 162 residues long: Beta-carotene hydroxylase (162 aa).

Residues 8–135 form the Fatty acid hydroxylase domain; it reads VATVLVMELT…GRDHCVSFGF (128 aa).

This sequence belongs to the sterol desaturase family.

It catalyses the reaction all-trans-beta-carotene + 4 reduced [2Fe-2S]-[ferredoxin] + 2 O2 + 4 H(+) = all-trans-zeaxanthin + 4 oxidized [2Fe-2S]-[ferredoxin] + 2 H2O. Its pathway is carotenoid biosynthesis; astaxanthin biosynthesis. Catalyzes the hydroxylation reaction from beta-carotene to zeaxanthin via beta-cryptoxanthin. The polypeptide is Beta-carotene hydroxylase (crtZ) (Paracoccus sp. (strain PC1) (Alcaligenes sp. (strain PC1))).